The following is a 260-amino-acid chain: Exosome complex component Rrp4 (260 aa).

One can recognise an S1 motif domain in the interval 59-128; sequence NDVVIGIVIV…SSMKVELALR (70 aa). The region spanning 136 to 194 is the KH domain; sequence KTGQIIKVESVKVPRVIGHGGSMISMLKKETNCSIFVGQNGRIWIDGKDEDIELLSKAL.

Belongs to the RRP4 family. As to quaternary structure, component of the archaeal exosome complex. Forms a trimer of Rrp4 and/or Csl4 subunits. The trimer associates with a hexameric ring-like arrangement composed of 3 Rrp41-Rrp42 heterodimers.

It localises to the cytoplasm. Its function is as follows. Non-catalytic component of the exosome, which is a complex involved in RNA degradation. Increases the RNA binding and the efficiency of RNA degradation. Confers strong poly(A) specificity to the exosome. The sequence is that of Exosome complex component Rrp4 from Methanosarcina acetivorans (strain ATCC 35395 / DSM 2834 / JCM 12185 / C2A).